The chain runs to 255 residues: MSSSLTIFFFFFASTFLYTSSNSFNITNILNEHDDFSNFNQLLSETQLASTINKRQTITVLVVSNGALSSLSGQPTSVIKKILSLHIVLDYYDQKKLKNLSKKTVLLTTLFQSSGLARGQQGFLNATVMKNGDVAFGSAVPGSSLDAQLQDTVAALPFNISVLHISSAIMIDVKGDNAPTASPLSPVSSPPRPAESPNDDGQDFDEPPSSAPGAAADEPSENAGSANGVSRNDSQPAFAFTLLMSFIWWFMARLR.

The N-terminal stretch at 1–23 (MSSSLTIFFFFFASTFLYTSSNS) is a signal peptide. An FAS1 domain is found at 24–169 (FNITNILNEH…ISVLHISSAI (146 aa)). Residues Asn-25, Asn-99, Asn-125, and Asn-159 are each glycosylated (N-linked (GlcNAc...) asparagine). The interval 179-231 (PTASPLSPVSSPPRPAESPNDDGQDFDEPPSSAPGAAADEPSENAGSANGVSR) is disordered. Residues 197–206 (PNDDGQDFDE) show a composition bias toward acidic residues. Over residues 222-231 (NAGSANGVSR) the composition is skewed to polar residues. Ser-225 carries the GPI-anchor amidated serine lipid modification. A propeptide spans 226-255 (ANGVSRNDSQPAFAFTLLMSFIWWFMARLR) (removed in mature form).

Belongs to the fasciclin-like AGP family.

The protein resides in the cell membrane. Functionally, may be a cell surface adhesion protein. In Arabidopsis thaliana (Mouse-ear cress), this protein is Fasciclin-like arabinogalactan protein 14 (FLA14).